A 977-amino-acid polypeptide reads, in one-letter code: RNA-binding protein 15 (977 aa).

Composition is skewed to basic and acidic residues over residues 1 to 10 (MRTAGRDPVP), 35 to 52 (RGDDLRRPATMKGKERSP), 59 to 72 (RGGEDSTSRGERSK), and 98 to 113 (LHLDKSSSRGGSREYD). Residues 1 to 167 (MRTAGRDPVP…SSAPGGGDGA (167 aa)) form a disordered region. S109 carries the post-translational modification Phosphoserine. Over residues 119-130 (SSSRLHSYSSPS) the composition is skewed to low complexity. The segment covering 135–150 (SGGGESRSSSRGGGGE) has biased composition (gly residues). The segment covering 151–160 (SRSSGAASSA) has biased composition (low complexity). Residues 170-252 (KTLKISELGS…RPLKIEAVYV (83 aa)) enclose the RRM 1 domain. Residues S179, S208, and S210 each carry the phosphoserine modification. A Glycyl lysine isopeptide (Lys-Gly) (interchain with G-Cter in SUMO2) cross-link involves residue K246. 3 positions are modified to phosphoserine: S253, S257, and S259. The disordered stretch occupies residues 256 to 298 (RSRSPLDKDTYPPSASVVGASVGGHRHPPGGGGGQRSLSPGGA). A Phosphotyrosine modification is found at Y266. A phosphoserine mark is found at S292, S294, and S365. 2 consecutive RRM domains span residues 374-451 (RTLF…YGKA) and 455-529 (TRLW…FADT). Residues K406, K420, and K445 each participate in a glycyl lysine isopeptide (Lys-Gly) (interchain with G-Cter in SUMO2) cross-link. K450 carries the N6-acetyllysine modification. 2 stretches are compositionally biased toward basic and acidic residues: residues 555 to 581 (HRAPDPLRGARDRTPPLLYRDRDRDLY) and 613 to 661 (SLDR…ESDR). Residues 555-778 (HRAPDPLRGA…KQDGGTAPVA (224 aa)) are disordered. Phosphothreonine is present on T568. R578 carries the asymmetric dimethylarginine; alternate; by PRMT1 modification. R578 is modified (omega-N-methylarginine; alternate; by PRMT1). Phosphoserine is present on residues S622, S656, S670, S674, S700, and S741. Composition is skewed to basic and acidic residues over residues 673–728 (RSPE…AERD) and 741–750 (SPLKKEDRSD). A Glycyl lysine isopeptide (Lys-Gly) (interchain with G-Cter in SUMO2) cross-link involves residue K744. The segment covering 752-771 (SAPSTSTASSKLKSPSQKQD) has biased composition (polar residues). 3 positions are modified to phosphoserine: S765, S767, and S781. The SPOC domain maps to 777–956 (VASASPKLCL…YLVMIIVRGF (180 aa)). The tract at residues 865–884 (GSSDSRSSSSSAASDTATST) is disordered. The segment covering 866 to 884 (SSDSRSSSSSAASDTATST) has biased composition (low complexity). S935 carries the phosphoserine modification.

The protein belongs to the RRM Spen family. As to quaternary structure, component of the WMM complex, a N6-methyltransferase complex composed of a catalytic subcomplex, named MAC, and of an associated subcomplex, named MACOM. The MAC subcomplex is composed of METTL3 and METTL14. The MACOM subcomplex is composed of WTAP, ZC3H13, CBLL1/HAKAI, VIRMA, and, in some cases of RBM15 (RBM15 or RBM15B). Also a component of a MACOM-like complex, named WTAP complex, composed of WTAP, ZC3H13, CBLL1, VIRMA, RBM15, BCLAF1 and THRAP3. Interacts with RBPJ. Interacts (via SPOC domain) with SETD1B. Interacts with NXF1, the interaction is required to promote mRNA export. Interacts with SF3B1. (Microbial infection) Interacts with Epstein-Barr virus BSFL2/BMLF1. In terms of processing, methylated at Arg-578 by PRMT1, leading to promote ubiquitination by CNOT4 and subsequent degradation by the proteasome. Ubiquitinated by CNOT4 following methylation at Arg-578 by PRMT1.

Its subcellular location is the nucleus speckle. The protein resides in the nucleus. It is found in the nucleoplasm. The protein localises to the nucleus envelope. It localises to the nucleus membrane. In terms of biological role, RNA-binding protein that acts as a key regulator of N6-methyladenosine (m6A) methylation of RNAs, thereby regulating different processes, such as hematopoietic cell homeostasis, alternative splicing of mRNAs and X chromosome inactivation mediated by Xist RNA. Associated component of the WMM complex, a complex that mediates N6-methyladenosine (m6A) methylation of RNAs, a modification that plays a role in the efficiency of mRNA splicing and RNA processing. Plays a key role in m6A methylation, possibly by binding target RNAs and recruiting the WMM complex. Involved in random X inactivation mediated by Xist RNA: acts by binding Xist RNA and recruiting the WMM complex, which mediates m6A methylation, leading to target YTHDC1 reader on Xist RNA and promoting transcription repression activity of Xist. Required for the development of multiple tissues, such as the maintenance of the homeostasis of long-term hematopoietic stem cells and for megakaryocyte (MK) and B-cell differentiation. Regulates megakaryocyte differentiation by regulating alternative splicing of genes important for megakaryocyte differentiation; probably regulates alternative splicing via m6A regulation. Required for placental vascular branching morphogenesis and embryonic development of the heart and spleen. Acts as a regulator of thrombopoietin response in hematopoietic stem cells by regulating alternative splicing of MPL. May also function as an mRNA export factor, stimulating export and expression of RTE-containing mRNAs which are present in many retrotransposons that require to be exported prior to splicing. High affinity binding of pre-mRNA to RBM15 may allow targeting of the mRNP to the export helicase DBP5 in a manner that is independent of splicing-mediated NXF1 deposition, resulting in export prior to splicing. May be implicated in HOX gene regulation. This is RNA-binding protein 15 from Homo sapiens (Human).